Here is a 204-residue protein sequence, read N- to C-terminus: Ras-related protein RabL (204 aa).

Residue 14 to 21 (GDSNVGKT) coordinates GTP. Positions 36-44 (RPPSIGPDY) match the Effector region motif. Residues 62 to 66 (DTCGQ) and 120 to 123 (TKSD) each bind GTP. 2 S-geranylgeranyl cysteine lipidation sites follow: C203 and C204.

This sequence belongs to the small GTPase superfamily. Rab family.

The protein localises to the cell membrane. This chain is Ras-related protein RabL (rabL), found in Dictyostelium discoideum (Social amoeba).